The primary structure comprises 524 residues: Cytochrome P450 4F11 (524 aa).

The helical transmembrane segment at 15–37 (AASPWLLLLLVGGSWLLARVLAW) threads the bilayer. Residues Cys-45 and Cys-260 each carry the 4-hydroxynonenal-conjugated cysteine modification. A 4-hydroxynonenal-conjugated histidine modification is found at His-261. Glu-328 is a heme binding site. 4-hydroxynonenal-conjugated histidine is present on His-347. Cys-354 carries the post-translational modification 4-hydroxynonenal-conjugated cysteine. The residue at position 451 (Lys-451) is a 4-hydroxynonenal-conjugated lysine. Cys-468 contacts heme.

Belongs to the cytochrome P450 family. It depends on heme as a cofactor. In terms of processing, 4-hydroxynonenal conjugation impairs substrate binding and the long-chain fatty acid omega-monooxygenase activity. In terms of tissue distribution, expressed mainly in human liver, followed by kidney, heart, and skeletal muscle.

Its subcellular location is the endoplasmic reticulum membrane. It is found in the microsome membrane. The enzyme catalyses an organic molecule + reduced [NADPH--hemoprotein reductase] + O2 = an alcohol + oxidized [NADPH--hemoprotein reductase] + H2O + H(+). It carries out the reaction an omega-methyl-long-chain fatty acid + reduced [NADPH--hemoprotein reductase] + O2 = an omega-hydroxy-long-chain fatty acid + oxidized [NADPH--hemoprotein reductase] + H2O + H(+). The catalysed reaction is dodecanoate + reduced [NADPH--hemoprotein reductase] + O2 = 12-hydroxydodecanoate + oxidized [NADPH--hemoprotein reductase] + H2O + H(+). It catalyses the reaction hexadecanoate + reduced [NADPH--hemoprotein reductase] + O2 = 16-hydroxyhexadecanoate + oxidized [NADPH--hemoprotein reductase] + H2O + H(+). The enzyme catalyses (9Z)-octadecenoate + reduced [NADPH--hemoprotein reductase] + O2 = 18-hydroxy-(9Z)-octadecenoate + oxidized [NADPH--hemoprotein reductase] + H2O + H(+). It carries out the reaction (5Z,8Z,11Z,14Z)-eicosatetraenoate + reduced [NADPH--hemoprotein reductase] + O2 = 20-hydroxy-(5Z,8Z,11Z,14Z)-eicosatetraenoate + oxidized [NADPH--hemoprotein reductase] + H2O + H(+). The catalysed reaction is (4Z,7Z,10Z,13Z,16Z,19Z)-docosahexaenoate + reduced [NADPH--hemoprotein reductase] + O2 = 22-hydroxy-(4Z,7Z,10Z,13Z,16Z,19Z)-docosahexaenoate + oxidized [NADPH--hemoprotein reductase] + H2O + H(+). It catalyses the reaction 8-hydroxy-(5Z,9E,11Z,14Z)-eicosatetraenoate + reduced [NADPH--hemoprotein reductase] + O2 = 8,20-dihydroxy-(5Z,9E,11Z,14Z)-eicosatetraenoate + oxidized [NADPH--hemoprotein reductase] + H2O + H(+). The enzyme catalyses 3-hydroxyhexadecanoate + reduced [NADPH--hemoprotein reductase] + O2 = 3,16-dihydroxyhexadecanoate + oxidized [NADPH--hemoprotein reductase] + H2O + H(+). It carries out the reaction 3-hydroxyoctadecanoate + reduced [NADPH--hemoprotein reductase] + O2 = 3,18-dihydroxyoctadecanoate + oxidized [NADPH--hemoprotein reductase] + H2O + H(+). The catalysed reaction is phylloquinone + reduced [NADPH--hemoprotein reductase] + O2 = omega-hydroxyphylloquinone + oxidized [NADPH--hemoprotein reductase] + H2O + H(+). It catalyses the reaction menaquinone-4 + reduced [NADPH--hemoprotein reductase] + O2 = omega-hydroxymenaquinone-4 + oxidized [NADPH--hemoprotein reductase] + H2O + H(+). The enzyme catalyses 2-hexyl-5-pentylresorcinol + reduced [NADPH--hemoprotein reductase] + O2 = 2-hexyl-5-(5-hydroxypentyl)resorcinol + oxidized [NADPH--hemoprotein reductase] + H2O + H(+). It carries out the reaction 2-hexyl-5-heptylresorcinol + reduced [NADPH--hemoprotein reductase] + O2 = 2-hexyl-5-(7-hydroxyheptyl)resorcinol + oxidized [NADPH--hemoprotein reductase] + H2O + H(+). The catalysed reaction is 12-hydroxy-(5Z,8Z,10E,14Z)-eicosatetraenoate + reduced [NADPH--hemoprotein reductase] + O2 = 12,20-dihydroxy-(5Z,8Z,10E,14Z)-eicosatetraenoate + oxidized [NADPH--hemoprotein reductase] + H2O + H(+). It catalyses the reaction 15-hydroxy-(5Z,8Z,11Z,13E)-eicosatetraenoate + reduced [NADPH--hemoprotein reductase] + O2 = 15,20-dihydroxy-(5Z,8Z,11Z,13E)-eicosatetraenoate + oxidized [NADPH--hemoprotein reductase] + H2O + H(+). Its pathway is lipid metabolism; arachidonate metabolism. It functions in the pathway lipid metabolism; oxylipin biosynthesis. The protein operates within cofactor degradation; phylloquinone degradation. It participates in xenobiotic degradation. With respect to regulation, inhibition of the long-chain fatty acid omega-monooxygenase activity by 4-hydroxynonenal (4-HNE) conjugation. In terms of biological role, a cytochrome P450 monooxygenase involved in the metabolism of various endogenous substrates, including fatty acids and their oxygenated derivatives (oxylipins). Mechanistically, uses molecular oxygen inserting one oxygen atom into a substrate, and reducing the second into a water molecule, with two electrons provided by NADPH via cytochrome P450 reductase (CPR; NADPH-ferrihemoprotein reductase). Catalyzes with high efficiency the oxidation of the terminal carbon (omega-oxidation) of 3-hydroxy fatty acids, such as 3-hydroxyhexadecanoic and 3-hydroxyoctadecanoic acids, likely participating in the biosynthesis of long-chain 3-hydroxydicarboxylic acids. Omega-hydroxylates and inactivates phylloquinone (vitamin K1), and menaquinone-4 (MK-4, a form of vitamin K2), both acting as cofactors in blood coagulation. Metabolizes with low efficiciency fatty acids, including (5Z,8Z,11Z,14Z)-eicosatetraenoic acid (arachidonate) and its oxygenated metabolite 8-hydroxyeicosatetraenoic acid (8-HETE). Catalyzes N- and O-demethylation of drugs such as erythromycin, benzphetamine, ethylmorphine, chlorpromazine, imipramine and verapamil. Catalyzes the oxidation of dialkylresorcinol 2. The protein is Cytochrome P450 4F11 of Homo sapiens (Human).